The primary structure comprises 268 residues: MLFVHAHPDDESITTGGTIARYSAEGAHVTVVTCTLGEEGEIIPAELEQLGAWAGDQLGGYRIGELAEAGVALGWSEHRFLGGPGRWRDSGMAGVESNEHPRAFVRGAMSEQVEQLLAVFDEVRPEVVVTYDPNGGYGHPDHIRAHRVATAAVERSEGVRRLFYTVSSREATTRGLAALRRDERVPFRVPADEELPTTPDADITTRVDISAYREVKFAALRAHRTQITVGPDCFALSNGIAQPVPTTEFFVLARGPKEGADTDLFGGL.

3 residues coordinate Zn(2+): His7, Asp10, and His142.

Belongs to the MshB deacetylase family. Zn(2+) serves as cofactor.

It catalyses the reaction 1D-myo-inositol 2-acetamido-2-deoxy-alpha-D-glucopyranoside + H2O = 1D-myo-inositol 2-amino-2-deoxy-alpha-D-glucopyranoside + acetate. Catalyzes the deacetylation of 1D-myo-inositol 2-acetamido-2-deoxy-alpha-D-glucopyranoside (GlcNAc-Ins) in the mycothiol biosynthesis pathway. This Saccharomonospora viridis (strain ATCC 15386 / DSM 43017 / JCM 3036 / CCUG 5913 / NBRC 12207 / NCIMB 9602 / P101) (Thermoactinomyces viridis) protein is 1D-myo-inositol 2-acetamido-2-deoxy-alpha-D-glucopyranoside deacetylase.